A 252-amino-acid chain; its full sequence is Sororin (252 aa).

Disordered regions lie at residues 1–48 (MSGR…WPKT) and 72–142 (AVQS…SKKV). Phosphoserine occurs at positions 21, 33, 35, 75, 79, and 83. The segment covering 86–104 (LEKENEPPGRELTKEDLFK) has biased composition (basic and acidic residues). The KEN box motif lies at 88-90 (KEN). T98 carries the post-translational modification Phosphothreonine. The segment covering 105-116 (THSVPATPTSTP) has biased composition (low complexity). Residue S107 is modified to Phosphoserine. Residues T111 and T115 each carry the phosphothreonine modification. The span at 124–140 (SSSKEGELDARDLEMSK) shows a compositional bias: basic and acidic residues. S154 carries the post-translational modification Phosphoserine. The residue at position 159 (T159) is a Phosphothreonine. The FGF motif motif lies at 166-168 (FGF). Positions 199 to 222 (WAPDMTLPGISPPPEKQKRKKKKM) are disordered. Residue S209 is modified to Phosphoserine. Residues 230-252 (LDEWAAAMNAEFEAAEQFDLLVE) are C-terminal Sororin domain.

The protein belongs to the sororin family. Interacts with the APC/C complex. Interacts with the chromatin-bound cohesin complex; the interaction is indirect, occurs after DNA replication and requires acetylation of the cohesin component SMC3. Interacts (via the FGF motif) with PDS5A and PDS5B; the interaction is direct and prevents the interaction of PDS5A with WAPL. Post-translationally, phosphorylated. Phosphorylation, as cells enter mitosis, disrupts the interaction with PDS5A and relieves the inhibition of WAPL by CDCA5. In terms of processing, ubiquitinated by the APC/C complex in G1, leading to its degradation.

It localises to the nucleus. The protein resides in the chromosome. Its subcellular location is the cytoplasm. Functionally, regulator of sister chromatid cohesion in mitosis stabilizing cohesin complex association with chromatin. May antagonize the action of WAPL which stimulates cohesin dissociation from chromatin. Cohesion ensures that chromosome partitioning is accurate in both meiotic and mitotic cells and plays an important role in DNA repair. Required for efficient DNA double-stranded break repair. In Homo sapiens (Human), this protein is Sororin (CDCA5).